Reading from the N-terminus, the 322-residue chain is MNSIHGHYHIQLSNYSAGENLQSATLTEGVIGAHRVKVETALSHSNLQKKLSATIKHNQSGRSMLDRKLTSDGKANQRSSFTFSMIMYRMIHFVLSTRVPAVRESVANYGGNINFKFAQTKGAFLHKIIKHSDTASGVCEALCAHWIRSHAQGQSLFDQLYVGGRKGKFQIDTLYSIKQLQIDGCKADVDQDEVTLDWFKKNGISERMIERHCLLRPVDVTGTTESEGLDQLLNAILDTHGIGYGYKKIHLSGQMSAHAIAAYVNEKSGVTFFDPNFGEFHFSDKEKFRKWFTNSFWDNSMYHYPLGVGQRFRVLTFDSKEV.

Catalysis depends on residues C139, H258, and D274.

It belongs to the peptidase C58 family. Interacts with human ARHA.

Its subcellular location is the secreted. Cysteine protease, which is translocated into infected cells and plays a central role in pathogenesis by cleaving the C-terminus end of the human small GTPase RhoA/ARHA, a regulator of cytoskeleton. Once cleaved, ARHA loses its lipid modification, and is released from the cell membrane, leading to the subsequent disruption of actin cytoskeleton of the host cell. The polypeptide is Cysteine protease YopT (yopT) (Yersinia pseudotuberculosis serotype I (strain IP32953)).